A 955-amino-acid chain; its full sequence is Thrombospondin-4 (955 aa).

The N-terminal stretch at 1–24 (MPRRKGLCLFLQMLLLHLYGVCQA) is a signal peptide. One can recognise a Laminin G-like domain in the interval 25–192 (QPNYQVFDLL…MDELKLVMGG (168 aa)). The EGF-like 1 domain occupies 281–320 (PKPRCDATSCFRGVRCIDTEGGFQCGPCPEGYTGNGVICT). Cystine bridges form between Cys-285–Cys-296, Cys-290–Cys-305, Cys-308–Cys-319, Cys-325–Cys-336, Cys-330–Cys-345, Cys-348–Cys-372, Cys-378–Cys-392, Cys-386–Cys-401, Cys-404–Cys-416, Cys-422–Cys-435, Cys-429–Cys-445, Cys-447–Cys-458, Cys-474–Cys-479, Cys-484–Cys-504, Cys-520–Cys-540, Cys-543–Cys-563, Cys-579–Cys-599, Cys-602–Cys-622, Cys-640–Cys-660, Cys-680–Cys-700, and Cys-716–Cys-937. The EGF-like 2; calcium-binding domain maps to 321–358 (DVDECRLNPCFLGVRCINTSPGFKCESCPPGYTGSTIQ). One can recognise an EGF-like 3; calcium-binding domain in the interval 374–415 (DTNECENGRNGGCTSNSLCINTMGSFRCGGCKPGYVGDQIKG). The EGF-like 4 domain maps to 418–459 (PEKSCRHGQNPCHASAQCSEEKDGDVTCTCSVGWAGNGYLCG). TSP type-3 repeat units lie at residues 460–492 (KDTD…NSGQ), 493–528 (EDTD…NIDQ), 529–551 (KNSD…NNDQ), 552–587 (RDTD…NVDQ), 588–610 (KDKD…NPNQ), 611–648 (SDID…NSNQ), 649–688 (LDTD…NPGQ), and 689–724 (EDDN…EITL). The N-linked (GlcNAc...) asparagine glycan is linked to Asn-609. The disordered stretch occupies residues 610-678 (QSDIDNDLVG…IPDTVPPGPD (69 aa)). The segment covering 637 to 649 (TDNCPTVINSNQL) has biased composition (polar residues). Positions 657–668 (GDECDDDDDNDG) are enriched in acidic residues. Residues 728 to 942 (RAYQTVVLDP…LKYRCNDTIP (215 aa)) enclose the TSP C-terminal domain. N-linked (GlcNAc...) asparagine glycosylation occurs at Asn-938.

The protein belongs to the thrombospondin family. Homotrimer; disulfide-linked.

Its subcellular location is the endoplasmic reticulum. The protein localises to the sarcoplasmic reticulum. The protein resides in the secreted. It is found in the extracellular space. It localises to the extracellular matrix. Functionally, adhesive glycoprotein that mediates cell-to-cell and cell-to-matrix interactions and may be involved in various processes including cellular proliferation, migration, adhesion and attachment. May play a role in ER stress response. May participate in the genesis and function of cardiac and skeletal muscle. The sequence is that of Thrombospondin-4 (thbs4) from Xenopus laevis (African clawed frog).